The following is a 22-amino-acid chain: Caerin-3.1 (22 aa).

Lys22 carries the lysine amide modification.

It belongs to the frog skin active peptide (FSAP) family. Caerin subfamily. In terms of tissue distribution, expressed by the skin dorsal glands.

It is found in the secreted. Antibacterial peptide with narrow spectrum of activity. Inhibits the formation of NO by neuronal nitric oxide synthase. In Litoria rothii (Roth's tree frog), this protein is Caerin-3.1.